We begin with the raw amino-acid sequence, 156 residues long: Small ribosomal subunit protein uS7 (156 aa).

The protein belongs to the universal ribosomal protein uS7 family. Part of the 30S ribosomal subunit. Contacts proteins S9 and S11.

Its function is as follows. One of the primary rRNA binding proteins, it binds directly to 16S rRNA where it nucleates assembly of the head domain of the 30S subunit. Is located at the subunit interface close to the decoding center, probably blocks exit of the E-site tRNA. The sequence is that of Small ribosomal subunit protein uS7 from Paraburkholderia phymatum (strain DSM 17167 / CIP 108236 / LMG 21445 / STM815) (Burkholderia phymatum).